A 617-amino-acid chain; its full sequence is BPI fold-containing family B member 4 (617 aa).

Positions 1–17 (MWTAWCVAALSVAAVCG) are cleaved as a signal peptide. The segment at 124-149 (RPSDSAYHRGPGRYRSAADPSSAGRL) is disordered. N-linked (GlcNAc...) asparagine glycosylation is present at Asn-275. Cys-297 and Cys-334 are joined by a disulfide.

The protein belongs to the BPI/LBP/Plunc superfamily. BPI/LBP family. Highly expressed in olfactory mucosa but undetectable in thymus, kidney, lung, brain, spleen and liver.

Its subcellular location is the secreted. It localises to the cytoplasm. May have the capacity to recognize and bind specific classes of odorants. May act as a carrier molecule, transporting odorants across the mucus layer to access receptor sites. May serve as a primary defense mechanism by recognizing and removing potentially harmful odorants or pathogenic microorganisms from the mucosa or clearing excess odorant from mucus to enable new odorant stimuli to be received. The chain is BPI fold-containing family B member 4 (Bpifb4) from Rattus norvegicus (Rat).